We begin with the raw amino-acid sequence, 484 residues long: tRNA-2-methylthio-N(6)-dimethylallyladenosine synthase (484 aa).

The region spanning 36–153 (GKLYIKTHGC…LPELIRARRE (118 aa)) is the MTTase N-terminal domain. [4Fe-4S] cluster contacts are provided by Cys-45, Cys-82, Cys-116, Cys-190, Cys-194, and Cys-197. Residues 176–415 (RAEGPSAFVS…HINAHAASIS (240 aa)) form the Radical SAM core domain. Residues 416 to 479 (QSMVGSVQRV…SNSLRGRIQL (64 aa)) form the TRAM domain. The segment at 428–450 (EGPSRRDPNELTGKSENMRPVNF) is disordered.

Belongs to the methylthiotransferase family. MiaB subfamily. In terms of assembly, monomer. [4Fe-4S] cluster is required as a cofactor.

It is found in the cytoplasm. The enzyme catalyses N(6)-dimethylallyladenosine(37) in tRNA + (sulfur carrier)-SH + AH2 + 2 S-adenosyl-L-methionine = 2-methylsulfanyl-N(6)-dimethylallyladenosine(37) in tRNA + (sulfur carrier)-H + 5'-deoxyadenosine + L-methionine + A + S-adenosyl-L-homocysteine + 2 H(+). Its function is as follows. Catalyzes the methylthiolation of N6-(dimethylallyl)adenosine (i(6)A), leading to the formation of 2-methylthio-N6-(dimethylallyl)adenosine (ms(2)i(6)A) at position 37 in tRNAs that read codons beginning with uridine. The chain is tRNA-2-methylthio-N(6)-dimethylallyladenosine synthase from Xanthomonas axonopodis pv. citri (strain 306).